The chain runs to 89 residues: Small ribosomal subunit protein uS15 (89 aa).

This sequence belongs to the universal ribosomal protein uS15 family. As to quaternary structure, part of the 30S ribosomal subunit. Forms a bridge to the 50S subunit in the 70S ribosome, contacting the 23S rRNA.

One of the primary rRNA binding proteins, it binds directly to 16S rRNA where it helps nucleate assembly of the platform of the 30S subunit by binding and bridging several RNA helices of the 16S rRNA. In terms of biological role, forms an intersubunit bridge (bridge B4) with the 23S rRNA of the 50S subunit in the ribosome. This chain is Small ribosomal subunit protein uS15, found in Staphylococcus epidermidis (strain ATCC 12228 / FDA PCI 1200).